Consider the following 793-residue polypeptide: WASP homolog-associated protein with actin, membranes and microtubules (793 aa).

The tract at residues 1 to 253 (MDSEQPDSLD…EVATSCKLGI (253 aa)) is mediates association with membranes. The segment at 254–623 (LKSLDEDELG…FVPVSDQTLS (370 aa)) is mediates interaction with microtubules. Coiled-coil stretches lie at residues 265–290 (RRVAALQKEASEWTRQAEEAVGSIQD) and 445–503 (LGDN…LHQH). Disordered stretches follow at residues 556-661 (SMVS…SFQG) and 675-699 (EDRPLPLACDPSAGRPCDYQGPGSM). Residues 566-579 (SQKRLSTAHHHKTA) are compositionally biased toward basic residues. Residues 618–628 (SDQTLSGSSED) show a composition bias toward polar residues. The mediates actin nucleation stretch occupies residues 624 to 793 (GSSEDLSLPP…DEPSPTEWDR (170 aa)). Residues 632–654 (PPQPPAPPLPPPPPPPPPPPLPP) show a composition bias toward pro residues. WH2 domains are found at residues 698–716 (SMDEVLASLRQGKASLRKV) and 728–745 (VNEQVLAAIRQGVQLKKV). Positions 755–785 (KKSTSDLERSIREALERIKKVSADSEEDNDE) form a coiled coil. The disordered stretch occupies residues 772 to 793 (IKKVSADSEEDNDEPSPTEWDR). Acidic residues predominate over residues 778–787 (DSEEDNDEPS). Ser779 is modified (phosphoserine).

As to quaternary structure, interacts with ACTR3; indicative for an association with the ARP2/3 complex. Associates with microtubules; in vitro binds to tubulin heterodimer in a 1:1 stoichiometry; decorates microtubules with a repeat of 80 A along protofilaments. Interacts with RHOD (in GTP-bound form).

Its subcellular location is the cytoplasm. The protein localises to the endoplasmic reticulum-Golgi intermediate compartment. It localises to the cytoplasmic vesicle membrane. It is found in the golgi apparatus. The protein resides in the cis-Golgi network. In terms of biological role, acts as a nucleation-promoting factor (NPF) that stimulates Arp2/3-mediated actin polymerization both at the Golgi apparatus and along tubular membranes. Involved as a regulator of Golgi positioning and morphology. Its activity in membrane tubulation requires F-actin and interaction with microtubules. Proposed to use coordinated actin-nucleating and microtubule-binding activities of distinct WHAMM molecules to drive membrane tubule elongation; when MT-bound can recruit and remodel membrane vesicles but is prevented to activate the Arp2/3 complex. Required for RhoD-dependent actin reorganization such as in cell adhesion and cell migration. Participates in vesicle transport between the endoplasmic reticulum and the Golgi complex. This chain is WASP homolog-associated protein with actin, membranes and microtubules (Whamm), found in Mus musculus (Mouse).